The sequence spans 337 residues: DNA-directed RNA polymerase subunit alpha (337 aa).

The tract at residues 1–231 (MRNITTSAYT…KQLSVFDKIT (231 aa)) is alpha N-terminal domain (alpha-NTD). Positions 248 to 337 (NTKLLQNITD…IAELKAQNEG (90 aa)) are alpha C-terminal domain (alpha-CTD).

This sequence belongs to the RNA polymerase alpha chain family. As to quaternary structure, homodimer. The RNAP catalytic core consists of 2 alpha, 1 beta, 1 beta' and 1 omega subunit. When a sigma factor is associated with the core the holoenzyme is formed, which can initiate transcription.

The catalysed reaction is RNA(n) + a ribonucleoside 5'-triphosphate = RNA(n+1) + diphosphate. DNA-dependent RNA polymerase catalyzes the transcription of DNA into RNA using the four ribonucleoside triphosphates as substrates. This chain is DNA-directed RNA polymerase subunit alpha, found in Campylobacter jejuni subsp. jejuni serotype O:6 (strain 81116 / NCTC 11828).